Reading from the N-terminus, the 443-residue chain is UPF0597 protein DVU_0440 (443 aa).

The protein belongs to the UPF0597 family.

The polypeptide is UPF0597 protein DVU_0440 (Nitratidesulfovibrio vulgaris (strain ATCC 29579 / DSM 644 / CCUG 34227 / NCIMB 8303 / VKM B-1760 / Hildenborough) (Desulfovibrio vulgaris)).